The chain runs to 62 residues: Toxin Tst2 (62 aa).

One can recognise an LCN-type CS-alpha/beta domain in the interval 1 to 62 (KEGYAMDHEG…KVWDYATNKC (62 aa)). 4 disulfide bridges follow: Cys-11-Cys-62, Cys-15-Cys-38, Cys-23-Cys-43, and Cys-27-Cys-45. Cys-62 carries the post-translational modification Cysteine amide.

Expressed by the venom gland.

It localises to the secreted. Functionally, alpha toxins bind voltage-independently at site-3 of sodium channels (Nav) and inhibit the inactivation of the activated channels, thereby blocking neuronal transmission. Is toxic to mice. This chain is Toxin Tst2, found in Tityus stigmurus (Brazilian scorpion).